A 187-amino-acid polypeptide reads, in one-letter code: MSTTFDKDQENEQQQQDAQAIWKKILSPGARITKDDVDFAIDNLESAPDVPYEFMYATFSPNAKIYQPTAIAVSGVGGIIGALLALKRALQYGGPKYYVTTEEVIKATDQKSPLYLANYALNRLLKAYPAQVVVIKPDDFDKIKTLLSSGGVYISGLPYETLIPISQLSGFGRIWHYSPIQKKFFVF.

Residues 65-85 (IYQPTAIAVSGVGGIIGALLA) form a helical membrane-spanning segment.

It localises to the host membrane. Its subcellular location is the virion. This chain is Structural protein ORF187, found in Acidianus two-tailed virus (ATV).